A 429-amino-acid chain; its full sequence is Adenylosuccinate synthetase (429 aa).

Residues Gly-12–Lys-18 and Gly-40–Thr-42 each bind GTP. The active-site Proton acceptor is the Asp-13. Mg(2+)-binding residues include Asp-13 and Gly-40. IMP contacts are provided by residues Asp-13–Lys-16, Asn-38–His-41, Thr-127, Arg-141, Gln-222, Thr-237, and Arg-301. Residue His-41 is the Proton donor of the active site. Position 297 to 303 (Ala-297 to Arg-303) interacts with substrate. GTP contacts are provided by residues Arg-303, Lys-329–Asp-331, and Ser-411–Gly-413.

Belongs to the adenylosuccinate synthetase family. In terms of assembly, homodimer. Mg(2+) is required as a cofactor.

The protein resides in the cytoplasm. It catalyses the reaction IMP + L-aspartate + GTP = N(6)-(1,2-dicarboxyethyl)-AMP + GDP + phosphate + 2 H(+). It functions in the pathway purine metabolism; AMP biosynthesis via de novo pathway; AMP from IMP: step 1/2. Plays an important role in the de novo pathway of purine nucleotide biosynthesis. Catalyzes the first committed step in the biosynthesis of AMP from IMP. The polypeptide is Adenylosuccinate synthetase (Endomicrobium trichonymphae).